The following is a 151-amino-acid chain: Ribonuclease H (151 aa).

In terms of domain architecture, RNase H type-1 spans M1–A146. 4 residues coordinate Mg(2+): D9, E52, D74, and D138.

Belongs to the RNase H family. In terms of assembly, monomer. The cofactor is Mg(2+).

The protein localises to the cytoplasm. It carries out the reaction Endonucleolytic cleavage to 5'-phosphomonoester.. In terms of biological role, endonuclease that specifically degrades the RNA of RNA-DNA hybrids. This chain is Ribonuclease H, found in Cereibacter sphaeroides (strain ATCC 17025 / ATH 2.4.3) (Rhodobacter sphaeroides).